Consider the following 883-residue polypeptide: Bifunctional heparan sulfate N-deacetylase/N-sulfotransferase 2 (883 aa).

The Cytoplasmic segment spans residues 1-18; sequence MLQLWKVVRPARQLELHR. A helical; Signal-anchor for type II membrane protein membrane pass occupies residues 19–39; sequence LILLLIAFSLGSMGFLAYYVS. Topologically, residues 40 to 883 are lumenal; it reads TSPKAKEPLP…REELQHSSLG (844 aa). The tract at residues 41 to 597 is heparan sulfate N-deacetylase 2; sequence SPKAKEPLPL…KRHKDIWSKE (557 aa). The segment at 49–81 is disordered; sequence PLPLGDCSSGGAAGPGPARPPVPPRPPRPPETA. The span at 65 to 78 shows a compositional bias: pro residues; it reads PARPPVPPRPPRPP. Residues N233, N350, and N400 are each glycosylated (N-linked (GlcNAc...) asparagine). Residues 598-883 are heparan sulfate N-sulfotransferase 2; the sequence is KTCDRLPKFL…REELQHSSLG (286 aa). The For sulfotransferase activity role is filled by K613. 613-617 contributes to the 3'-phosphoadenylyl sulfate binding site; the sequence is KTGTT. N666 is a glycosylation site (N-linked (GlcNAc...) asparagine). S711 contacts 3'-phosphoadenylyl sulfate. N-linked (GlcNAc...) asparagine glycosylation is found at N726 and N802. A disulfide bridge connects residues C817 and C827. 832-836 is a 3'-phosphoadenylyl sulfate binding site; that stretch reads KGRRY.

It belongs to the sulfotransferase 1 family. NDST subfamily. Monomer.

It is found in the golgi apparatus membrane. It catalyses the reaction alpha-D-glucosaminyl-[heparan sulfate](n) + 3'-phosphoadenylyl sulfate = N-sulfo-alpha-D-glucosaminyl-[heparan sulfate](n) + adenosine 3',5'-bisphosphate + 2 H(+). The protein operates within glycan metabolism; heparan sulfate biosynthesis. It functions in the pathway glycan metabolism; heparin biosynthesis. Functionally, essential bifunctional enzyme that catalyzes both the N-deacetylation and the N-sulfation of glucosamine (GlcNAc) of the glycosaminoglycan in heparan sulfate. Modifies the GlcNAc-GlcA disaccharide repeating sugar backbone to make N-sulfated heparosan, a prerequisite substrate for later modifications in heparin biosynthesis. Plays a role in determining the extent and pattern of sulfation of heparan sulfate. Required for the exosomal release of SDCBP, CD63 and syndecan. The polypeptide is Bifunctional heparan sulfate N-deacetylase/N-sulfotransferase 2 (NDST2) (Homo sapiens (Human)).